A 137-amino-acid polypeptide reads, in one-letter code: Small ribosomal subunit protein uS12 (137 aa).

The disordered stretch occupies residues 1-55 (MPTINQLVRKPRKSKTKQSDSPALNRGFNSKKKQFTNLNSPQKRGVCTRVGTMTP). At D102 the chain carries 3-methylthioaspartic acid. A disordered region spans residues 118 to 137 (SGVDGRRQGRSLYGTKKPKN).

This sequence belongs to the universal ribosomal protein uS12 family. In terms of assembly, part of the 30S ribosomal subunit. Contacts proteins S8 and S17. May interact with IF1 in the 30S initiation complex.

In terms of biological role, with S4 and S5 plays an important role in translational accuracy. Functionally, interacts with and stabilizes bases of the 16S rRNA that are involved in tRNA selection in the A site and with the mRNA backbone. Located at the interface of the 30S and 50S subunits, it traverses the body of the 30S subunit contacting proteins on the other side and probably holding the rRNA structure together. The combined cluster of proteins S8, S12 and S17 appears to hold together the shoulder and platform of the 30S subunit. This Staphylococcus epidermidis (strain ATCC 35984 / DSM 28319 / BCRC 17069 / CCUG 31568 / BM 3577 / RP62A) protein is Small ribosomal subunit protein uS12.